Consider the following 257-residue polypeptide: 3-methyl-2-oxobutanoate hydroxymethyltransferase (257 aa).

Mg(2+) contacts are provided by aspartate 42 and aspartate 81. 3-methyl-2-oxobutanoate is bound by residues 42–43, aspartate 81, and lysine 110; that span reads DS. Residue glutamate 112 coordinates Mg(2+). The active-site Proton acceptor is the glutamate 176.

Belongs to the PanB family. In terms of assembly, homodecamer; pentamer of dimers. It depends on Mg(2+) as a cofactor.

It is found in the cytoplasm. The catalysed reaction is 3-methyl-2-oxobutanoate + (6R)-5,10-methylene-5,6,7,8-tetrahydrofolate + H2O = 2-dehydropantoate + (6S)-5,6,7,8-tetrahydrofolate. It functions in the pathway cofactor biosynthesis; (R)-pantothenate biosynthesis; (R)-pantoate from 3-methyl-2-oxobutanoate: step 1/2. In terms of biological role, catalyzes the reversible reaction in which hydroxymethyl group from 5,10-methylenetetrahydrofolate is transferred onto alpha-ketoisovalerate to form ketopantoate. This chain is 3-methyl-2-oxobutanoate hydroxymethyltransferase, found in Pelagibacter ubique (strain HTCC1062).